The sequence spans 334 residues: tRNA uridine(34) hydroxylase (334 aa).

Residues 123–217 (SDPDVILVDT…YLEEVKQEES (95 aa)) form the Rhodanese domain. C177 serves as the catalytic Cysteine persulfide intermediate.

It belongs to the TrhO family.

The catalysed reaction is uridine(34) in tRNA + AH2 + O2 = 5-hydroxyuridine(34) in tRNA + A + H2O. Catalyzes oxygen-dependent 5-hydroxyuridine (ho5U) modification at position 34 in tRNAs. The sequence is that of tRNA uridine(34) hydroxylase from Shewanella putrefaciens (strain CN-32 / ATCC BAA-453).